A 200-amino-acid chain; its full sequence is Pyridoxine/pyridoxamine 5'-phosphate oxidase (200 aa).

FMN is bound by residues 48–53 (RMVLLK), 63–64 (YT), Lys-70, and Gln-92. Lys-53 serves as a coordination point for substrate. Substrate is bound by residues Tyr-110, Arg-114, and Ser-118. Residues 127-128 (QS) and Trp-171 each bind FMN. 177 to 179 (RLH) is a substrate binding site. Residue Arg-181 participates in FMN binding.

Belongs to the pyridoxamine 5'-phosphate oxidase family. In terms of assembly, homodimer. The cofactor is FMN.

It catalyses the reaction pyridoxamine 5'-phosphate + O2 + H2O = pyridoxal 5'-phosphate + H2O2 + NH4(+). The catalysed reaction is pyridoxine 5'-phosphate + O2 = pyridoxal 5'-phosphate + H2O2. It functions in the pathway cofactor metabolism; pyridoxal 5'-phosphate salvage; pyridoxal 5'-phosphate from pyridoxamine 5'-phosphate: step 1/1. The protein operates within cofactor metabolism; pyridoxal 5'-phosphate salvage; pyridoxal 5'-phosphate from pyridoxine 5'-phosphate: step 1/1. In terms of biological role, catalyzes the oxidation of either pyridoxine 5'-phosphate (PNP) or pyridoxamine 5'-phosphate (PMP) into pyridoxal 5'-phosphate (PLP). The chain is Pyridoxine/pyridoxamine 5'-phosphate oxidase from Cereibacter sphaeroides (strain ATCC 17029 / ATH 2.4.9) (Rhodobacter sphaeroides).